The primary structure comprises 209 residues: Large ribosomal subunit protein uL3 (209 aa).

The disordered stretch occupies residues 133 to 152 (THGNSLSHRVPGSIGQNQTP). Residue glutamine 150 is modified to N5-methylglutamine.

Belongs to the universal ribosomal protein uL3 family. As to quaternary structure, part of the 50S ribosomal subunit. Forms a cluster with proteins L14 and L19. In terms of processing, methylated by PrmB.

Functionally, one of the primary rRNA binding proteins, it binds directly near the 3'-end of the 23S rRNA, where it nucleates assembly of the 50S subunit. The protein is Large ribosomal subunit protein uL3 of Yersinia enterocolitica serotype O:8 / biotype 1B (strain NCTC 13174 / 8081).